An 807-amino-acid chain; its full sequence is Glycerol-3-phosphate acyltransferase (807 aa).

An HXXXXD motif motif is present at residues 305–310 (CHRSHM).

This sequence belongs to the GPAT/DAPAT family.

It localises to the cell inner membrane. The catalysed reaction is sn-glycerol 3-phosphate + an acyl-CoA = a 1-acyl-sn-glycero-3-phosphate + CoA. It participates in phospholipid metabolism; CDP-diacylglycerol biosynthesis; CDP-diacylglycerol from sn-glycerol 3-phosphate: step 1/3. The chain is Glycerol-3-phosphate acyltransferase from Escherichia coli O139:H28 (strain E24377A / ETEC).